The sequence spans 240 residues: Probable Ni/Fe-hydrogenase B-type cytochrome subunit (240 aa).

4 helical membrane passes run 31 to 51 (LWHWVTALSIVVLGVTGYFIG), 75 to 95 (FAAGYVLAIGFLGRVYWAFVG), 142 to 163 (LAMFCFFVIGAVFMSVTGFALY), and 196 to 213 (LGMWYLVVFVMIHVYLAA).

This sequence belongs to the HupC/HyaC/HydC family.

Its subcellular location is the cell membrane. Its function is as follows. Probable b-type cytochrome. This chain is Probable Ni/Fe-hydrogenase B-type cytochrome subunit (hupZ), found in Azotobacter chroococcum mcd 1.